Consider the following 468-residue polypeptide: Glutamate--tRNA ligase (468 aa).

Residues Pro-10–Gly-20 carry the 'HIGH' region motif. Zn(2+)-binding residues include Cys-99, Cys-101, Cys-126, and Asp-128. Positions Arg-236–Arg-240 match the 'KMSKS' region motif. Position 239 (Lys-239) interacts with ATP.

This sequence belongs to the class-I aminoacyl-tRNA synthetase family. Glutamate--tRNA ligase type 1 subfamily. Monomer. The cofactor is Zn(2+).

It localises to the cytoplasm. The catalysed reaction is tRNA(Glu) + L-glutamate + ATP = L-glutamyl-tRNA(Glu) + AMP + diphosphate. In terms of biological role, catalyzes the attachment of glutamate to tRNA(Glu) in a two-step reaction: glutamate is first activated by ATP to form Glu-AMP and then transferred to the acceptor end of tRNA(Glu). The chain is Glutamate--tRNA ligase from Syntrophobacter fumaroxidans (strain DSM 10017 / MPOB).